The sequence spans 189 residues: Photosystem I assembly protein Ycf4 (189 aa).

2 helical membrane passes run 25-45 (SVYFWAVALTGGGLGFTLAGL) and 62-82 (LVFIPQGIAMLFYGVLGSLAG).

It belongs to the Ycf4 family.

The protein localises to the cellular thylakoid membrane. Seems to be required for the assembly of the photosystem I complex. The sequence is that of Photosystem I assembly protein Ycf4 from Synechococcus sp. (strain JA-3-3Ab) (Cyanobacteria bacterium Yellowstone A-Prime).